Consider the following 1227-residue polypeptide: ATP-dependent helicase/nuclease subunit A (1227 aa).

A UvrD-like helicase ATP-binding domain is found at 37–503; that stretch reads QKRTAEQIEA…ILLKENFRSQ (467 aa). 58–65 serves as a coordination point for ATP; that stretch reads ASAGSGKT. Residues 532-816 enclose the UvrD-like helicase C-terminal domain; that stretch reads SLVAGSPGQK…QLMTIHKSKG (285 aa).

The protein belongs to the helicase family. AddA subfamily. As to quaternary structure, heterodimer of AddA and AddB/RexB. Mg(2+) serves as cofactor.

It catalyses the reaction Couples ATP hydrolysis with the unwinding of duplex DNA by translocating in the 3'-5' direction.. The catalysed reaction is ATP + H2O = ADP + phosphate + H(+). Its function is as follows. The heterodimer acts as both an ATP-dependent DNA helicase and an ATP-dependent, dual-direction single-stranded exonuclease. Recognizes the chi site generating a DNA molecule suitable for the initiation of homologous recombination. The AddA nuclease domain is required for chi fragment generation; this subunit has the helicase and 3' -&gt; 5' nuclease activities. The sequence is that of ATP-dependent helicase/nuclease subunit A from Streptococcus suis (strain 98HAH33).